Reading from the N-terminus, the 244-residue chain is tRNA pseudouridine synthase A (244 aa).

The Nucleophile role is filled by D52. Y110 contacts substrate.

This sequence belongs to the tRNA pseudouridine synthase TruA family. Homodimer.

It catalyses the reaction uridine(38/39/40) in tRNA = pseudouridine(38/39/40) in tRNA. Its function is as follows. Formation of pseudouridine at positions 38, 39 and 40 in the anticodon stem and loop of transfer RNAs. This Pelobacter propionicus (strain DSM 2379 / NBRC 103807 / OttBd1) protein is tRNA pseudouridine synthase A.